A 385-amino-acid chain; its full sequence is Trans-enoyl reductase poxH (385 aa).

NADP(+) is bound at residue 64–67 (QPYS). 156-163 (PDPAAPPI) provides a ligand contact to substrate. NADP(+) contacts are provided by residues 199–202 (STSV), 223–226 (SGTD), Tyr-241, and 289–290 (LG). 309 to 313 (HMAPL) lines the substrate pocket. An NADP(+)-binding site is contributed by 372–373 (KR).

Belongs to the zinc-containing alcohol dehydrogenase family. As to quaternary structure, monomer.

It participates in secondary metabolite biosynthesis. Functionally, trans-enoyl reductase; part of the gene cluster that mediates the biosynthesis of oxaleimides, cytotoxic compounds containing an unusual disubstituted succinimide moiety. The first step of the pathway is provided by the HR-PKS poxF that serves in a new mode of collaborative biosynthesis with the PKS-NRPS poxE, by providing the olefin containing amino acid substrate via the synthesis of an ACP-bound dec-4-enoate. The cytochrome P450 monooxygenase poxM-catalyzed oxidation at the alpha-position creates the enzyme-bound 2-hydroxydec-4-enoyl-ACP thioester, which may be prone to spontaneous hydrolysis to yield 2-hydroxydec-4-enoic acid due to increased electrophilicity of the carbonyl. 2-hydroxydec-4-enoic acid can then be further oxidized by poxM to yield the alpha-ketoacid 2-oxodec-4-enoicacid, which is reductively aminated by the aminotransferase poxL to yield (S,E)-2-aminodec-4-enoic acid. The Hybrid PKS-NRPS synthetase poxE then performs condensation between the octaketide product of its PKS modules and the amino group of (S,E)-2-aminodec-4-enoic acid which is activated and incorporated by the adenylation domain. The resulting aminoacyl product can be cyclized by the Diels-Alderase PoxQ and reductively released by the reductive (R) domain of poxE to yield an aldehyde intermediate. The released aldehyde is then substrate for a Knoevenagel condensation by the hydrolyase poxO followed by an oxidation at the 5-position of the pyrrolidone ring. The presence of the olefin from the amino acid building block allows for migration of the substituted allyl group to occur. This allylic transposition reaction takes place in a conjugate addition, semipinacol-like fashion to yield a succinimide intermediate. Iterative two-electron oxidations of the C7 methyl of the succinimide intermediate to the carboxylic acid can be catalyzed by one of two remaining cytochrome P450 monooxygenasess poxC or poxD to yield oxaleimide A. Subsequent oxidation yields the maleimide scaffold oxaleimide I. Both oxaleimide A and oxaleimide I can undergo oxidative modifications in the decalin ring to yield the series of products oxaleimides B to H. The sequence is that of Trans-enoyl reductase poxH from Penicillium oxalicum (strain 114-2 / CGMCC 5302) (Penicillium decumbens).